A 267-amino-acid polypeptide reads, in one-letter code: Undecaprenyl-diphosphatase (267 aa).

Transmembrane regions (helical) follow at residues L4–T24, F41–F61, L69–V89, L96–I116, A173–I193, I207–F227, and F239–L259.

The protein belongs to the UppP family.

The protein resides in the cell inner membrane. It catalyses the reaction di-trans,octa-cis-undecaprenyl diphosphate + H2O = di-trans,octa-cis-undecaprenyl phosphate + phosphate + H(+). Its function is as follows. Catalyzes the dephosphorylation of undecaprenyl diphosphate (UPP). Confers resistance to bacitracin. This Campylobacter jejuni subsp. jejuni serotype O:2 (strain ATCC 700819 / NCTC 11168) protein is Undecaprenyl-diphosphatase.